We begin with the raw amino-acid sequence, 454 residues long: Elongation factor Tu, mitochondrial (454 aa).

The transit peptide at Met-1–Thr-51 directs the protein to the mitochondrion. A tr-type G domain is found at Lys-65–Val-261. Residues Gly-74–Thr-81 form a G1 region. Gly-74–Thr-81 provides a ligand contact to GTP. A Phosphothreonine modification is found at Thr-82. The interval Gly-115–Ala-119 is G2. The interval Asp-136–Gly-139 is G3. GTP-binding positions include Asp-136–His-140 and Asn-191–Asp-194. The tract at residues Asn-191–Asp-194 is G4. The interval Ser-229 to Leu-231 is G5.

The protein belongs to the TRAFAC class translation factor GTPase superfamily. Classic translation factor GTPase family. EF-Tu/EF-1A subfamily.

It is found in the mitochondrion. This protein promotes the GTP-dependent binding of aminoacyl-tRNA to the A-site of ribosomes during protein biosynthesis. This chain is Elongation factor Tu, mitochondrial (TUFA), found in Arabidopsis thaliana (Mouse-ear cress).